The sequence spans 443 residues: Ribulose bisphosphate carboxylase large chain (443 aa).

Substrate is bound by residues Asn89 and Thr139. The active-site Proton acceptor is Lys141. Lys143 lines the substrate pocket. Mg(2+) is bound by residues Lys167, Asp169, and Glu170. N6-carboxylysine is present on Lys167. His260 functions as the Proton acceptor in the catalytic mechanism. 3 residues coordinate substrate: Arg261, His293, and Ser345.

This sequence belongs to the RuBisCO large chain family. Type I subfamily. Heterohexadecamer of 8 large chains and 8 small chains; disulfide-linked. The disulfide link is formed within the large subunit homodimers. It depends on Mg(2+) as a cofactor. The disulfide bond which can form in the large chain dimeric partners within the hexadecamer appears to be associated with oxidative stress and protein turnover.

Its subcellular location is the plastid. The protein localises to the chloroplast. It catalyses the reaction 2 (2R)-3-phosphoglycerate + 2 H(+) = D-ribulose 1,5-bisphosphate + CO2 + H2O. The enzyme catalyses D-ribulose 1,5-bisphosphate + O2 = 2-phosphoglycolate + (2R)-3-phosphoglycerate + 2 H(+). Its function is as follows. RuBisCO catalyzes two reactions: the carboxylation of D-ribulose 1,5-bisphosphate, the primary event in carbon dioxide fixation, as well as the oxidative fragmentation of the pentose substrate in the photorespiration process. Both reactions occur simultaneously and in competition at the same active site. The protein is Ribulose bisphosphate carboxylase large chain of Callitriche heterophylla (Large water-starwort).